The following is a 667-amino-acid chain: Chaperone protein DnaK (667 aa).

A Phosphothreonine; by autocatalysis modification is found at Thr196. 2 disordered regions span residues 495–525 and 595–667; these read EANS…RKER and AGEE…GDDE. Over residues 506-525 the composition is skewed to basic and acidic residues; it reads EKMKEEAEQHAEEDERRKER. A compositionally biased stretch (low complexity) spans 595–612; that stretch reads AGEEIREAQQQQAQQGAA. Residues 630–641 show a composition bias toward gly residues; that stretch reads GPAGGPTGGPAS. Acidic residues predominate over residues 647–667; that stretch reads DSDEEDVQDADYEVVDEGDDE.

This sequence belongs to the heat shock protein 70 family.

Functionally, acts as a chaperone. This is Chaperone protein DnaK from Salinibacter ruber (strain DSM 13855 / M31).